The following is a 162-amino-acid chain: Glycine cleavage system H protein, mitochondrial (162 aa).

The transit peptide at 1 to 31 directs the protein to the mitochondrion; the sequence is MALRMWASSTANALRLSSATRPHFSPLSRCF. Residues 53–135 enclose the Lipoyl-binding domain; it reads VATIGITDHA…YEDGWMIKVK (83 aa). Lys94 carries the post-translational modification N6-lipoyllysine.

Belongs to the GcvH family. The glycine cleavage system is composed of four proteins: P, T, L and H. (R)-lipoate serves as cofactor.

It localises to the mitochondrion. The glycine cleavage system catalyzes the degradation of glycine. The H protein shuttles the methylamine group of glycine from the P protein to the T protein. In Flaveria anomala (Yellowtops), this protein is Glycine cleavage system H protein, mitochondrial (GDCSH).